Reading from the N-terminus, the 60-residue chain is uncharacterized protein (60 aa).

It to E.coli YjeQ and H.influenzae HI_1714.

This is an uncharacterized protein from Azotobacter vinelandii.